A 436-amino-acid polypeptide reads, in one-letter code: Phosphomethylpyrimidine synthase (436 aa).

Substrate is bound by residues N69, M98, Y127, H163, 185–187 (SRG), 226–229 (DACR), and E265. H269 is a binding site for Zn(2+). Position 292 (Y292) interacts with substrate. H333 contacts Zn(2+). 3 residues coordinate [4Fe-4S] cluster: C409, C412, and C416.

The protein belongs to the ThiC family. Requires [4Fe-4S] cluster as cofactor.

It carries out the reaction 5-amino-1-(5-phospho-beta-D-ribosyl)imidazole + S-adenosyl-L-methionine = 4-amino-2-methyl-5-(phosphooxymethyl)pyrimidine + CO + 5'-deoxyadenosine + formate + L-methionine + 3 H(+). The protein operates within cofactor biosynthesis; thiamine diphosphate biosynthesis. In terms of biological role, catalyzes the synthesis of the hydroxymethylpyrimidine phosphate (HMP-P) moiety of thiamine from aminoimidazole ribotide (AIR) in a radical S-adenosyl-L-methionine (SAM)-dependent reaction. This chain is Phosphomethylpyrimidine synthase, found in Clostridium perfringens (strain SM101 / Type A).